Here is a 485-residue protein sequence, read N- to C-terminus: Glutamyl-tRNA(Gln) amidotransferase subunit A (485 aa).

Residues K78 and S153 each act as charge relay system in the active site. The Acyl-ester intermediate role is filled by S177.

This sequence belongs to the amidase family. GatA subfamily. Heterotrimer of A, B and C subunits.

It catalyses the reaction L-glutamyl-tRNA(Gln) + L-glutamine + ATP + H2O = L-glutaminyl-tRNA(Gln) + L-glutamate + ADP + phosphate + H(+). In terms of biological role, allows the formation of correctly charged Gln-tRNA(Gln) through the transamidation of misacylated Glu-tRNA(Gln) in organisms which lack glutaminyl-tRNA synthetase. The reaction takes place in the presence of glutamine and ATP through an activated gamma-phospho-Glu-tRNA(Gln). The chain is Glutamyl-tRNA(Gln) amidotransferase subunit A from Bacillus cereus (strain 03BB102).